We begin with the raw amino-acid sequence, 127 residues long: RutC family protein PYRAB12510 (127 aa).

It belongs to the RutC family.

In Pyrococcus abyssi (strain GE5 / Orsay), this protein is RutC family protein PYRAB12510.